The following is a 175-amino-acid chain: Movement protein (175 aa).

The tract at residues 30 to 47 (ADLDDDEEVTTGQEELFL) is homodimerization. Residues 50-156 (EQVRARHLFS…QRLTSTERNG (107 aa)) form an RNA-binding region. Phosphoserine is present on residues Ser64 and Ser133. 2 stretches are compositionally biased toward polar residues: residues 116 to 141 (SLTSWTHTVNSTPFPQLSTSSGSQSP) and 148 to 169 (RLTSTERNGTTLPRTNSGSSTK). The segment at 116–175 (SLTSWTHTVNSTPFPQLSTSSGSQSPGKGRLQRLTSTERNGTTLPRTNSGSSTKAMVLHR) is disordered.

Belongs to the polerovirus movement protein family. As to quaternary structure, homodimer. Post-translationally, phosphorylated.

The protein resides in the host cell junction. The protein localises to the host plasmodesma. It is found in the host Golgi apparatus. Its function is as follows. Together with movement protein P3a, facilitates long-distance movement of virions in host. Transports viral genome to neighboring plant cells directly through plasmosdesmata, without any budding. The movement protein allows efficient cell to cell propagation, by bypassing the host cell wall barrier. Binds ssRNA. The polypeptide is Movement protein (Turnip yellows virus (isolate FL-1) (TuYV)).